Here is a 210-residue protein sequence, read N- to C-terminus: Putative protein-lysine deacylase ABHD14B (210 aa).

N-acetylalanine is present on alanine 2. Serine 91 bears the Phosphoserine mark. Active-site charge relay system residues include serine 111, aspartate 162, and histidine 188.

It belongs to the AB hydrolase superfamily. ABHD14 family. In terms of assembly, may interact with TAF1. As to expression, ubiquitous. Detected in spleen, thymus, prostate, testis, ovary, small intestine, colon, peripheral blood leukocyte, heart, placenta, lung, liver, skeletal muscle, pancreas and kidney.

The protein localises to the cytoplasm. It localises to the nucleus. It catalyses the reaction L-lysyl-[protein] + acetyl-CoA = N(6)-acetyl-L-lysyl-[protein] + CoA + H(+). In terms of biological role, acts as an atypical protein-lysine deacetylase in vitro. Catalyzes the deacetylation of lysine residues using CoA as substrate, generating acetyl-CoA and the free amine of protein-lysine residues. Additional experiments are however required to confirm the protein-lysine deacetylase activity in vivo. Has hydrolase activity towards various surrogate p-nitrophenyl (pNp) substrates, such as pNp-butyrate, pNp-acetate and pNp-octanoate in vitro, with a strong preference for pNp-acetate. May activate transcription. The protein is Putative protein-lysine deacylase ABHD14B of Homo sapiens (Human).